The primary structure comprises 253 residues: Adenosylcobinamide-GDP ribazoletransferase (253 aa).

The next 7 helical transmembrane spans lie at 33–53, 56–76, 106–126, 132–152, 178–198, 209–229, and 233–253; these read ISPL…YVLL, ILEA…RGFN, IGSG…VALL, FYTI…GLYI, VLLF…FLVF, LGGS…PLFL, and EITN…LYLH.

The protein belongs to the CobS family. The cofactor is Mg(2+).

It localises to the cell membrane. It carries out the reaction alpha-ribazole + adenosylcob(III)inamide-GDP = adenosylcob(III)alamin + GMP + H(+). The catalysed reaction is alpha-ribazole 5'-phosphate + adenosylcob(III)inamide-GDP = adenosylcob(III)alamin 5'-phosphate + GMP + H(+). The protein operates within cofactor biosynthesis; adenosylcobalamin biosynthesis; adenosylcobalamin from cob(II)yrinate a,c-diamide: step 7/7. In terms of biological role, joins adenosylcobinamide-GDP and alpha-ribazole to generate adenosylcobalamin (Ado-cobalamin). Also synthesizes adenosylcobalamin 5'-phosphate from adenosylcobinamide-GDP and alpha-ribazole 5'-phosphate. The sequence is that of Adenosylcobinamide-GDP ribazoletransferase from Saccharolobus islandicus (strain M.16.27) (Sulfolobus islandicus).